Here is a 447-residue protein sequence, read N- to C-terminus: GTPase Der (447 aa).

EngA-type G domains are found at residues 3–167 (PVVA…NLPD) and 181–354 (IKLA…KSAT). GTP is bound by residues 9-16 (GRPNVGKS), 56-60 (DTGGF), 119-122 (NKAE), 187-194 (GRPNVGKS), 234-238 (DTAGL), and 299-302 (NKWD). The KH-like domain maps to 355–439 (RKMSTPVLTR…PLRIQFKSSQ (85 aa)).

It belongs to the TRAFAC class TrmE-Era-EngA-EngB-Septin-like GTPase superfamily. EngA (Der) GTPase family. In terms of assembly, associates with the 50S ribosomal subunit.

Its function is as follows. GTPase that plays an essential role in the late steps of ribosome biogenesis. This chain is GTPase Der, found in Variovorax paradoxus (strain S110).